The chain runs to 506 residues: FAD-linked oxidoreductase chry5 (506 aa).

The signal sequence occupies residues 1–17 (MHLQALTGLATLAVTAA). The FAD-binding PCMH-type domain occupies 59 to 241 (LDKPTVNIVA…TSVTSKTYDA (183 aa)). N-linked (GlcNAc...) asparagine glycans are attached at residues Asn205, Asn272, Asn281, Asn389, and Asn431.

This sequence belongs to the oxygen-dependent FAD-linked oxidoreductase family. Requires FAD as cofactor.

The protein operates within pigment biosynthesis. Functionally, FAD-linked oxidoreductase; part of the gene cluster that mediates the biosynthesis of the yellow pigment chrysogine. Pyruvic acid and anthranilic acid are likely substrates for the nonribosomal peptide synthetase chry1/NRPS14, with pyruvic acid adenylated by the first A domain and anthranilic acid by the second. If pyruvic acid and anthranilic acid are merged and released from chry1/NRPS14 by hydrolysis, a subsequent amidation would lead to 2-pyruvoylaminobenzamide. This process is probably catalyzed by the amidotransferase chry2 using glutamine as amino donor. The dehydrogenase chry5 that has a terminal berberine bridge domain for C-N cyclization could catalyze the cyclization of 2-pyruvoylaminobenzamide to yield acetyl-4(3H)-quinazolidinone. A final reduction of acetyl-4(3H)-quinazolidinone catalyzed by the oxidoreductase chry4 would result in chrysogine. In Gibberella zeae (strain ATCC MYA-4620 / CBS 123657 / FGSC 9075 / NRRL 31084 / PH-1) (Wheat head blight fungus), this protein is FAD-linked oxidoreductase chry5.